A 151-amino-acid polypeptide reads, in one-letter code: Large ribosomal subunit protein uL15 (151 aa).

The disordered stretch occupies residues 1-60 (MAENNPLKIHNLRPAPGAKTAKTRVGRGEASKGKTAGRGTKGTKARYQVPERFEGGQMPL).

The protein belongs to the universal ribosomal protein uL15 family. As to quaternary structure, part of the 50S ribosomal subunit.

Binds to the 23S rRNA. This is Large ribosomal subunit protein uL15 from Streptomyces avermitilis (strain ATCC 31267 / DSM 46492 / JCM 5070 / NBRC 14893 / NCIMB 12804 / NRRL 8165 / MA-4680).